The chain runs to 208 residues: Sec-independent protein translocase protein TatB (208 aa).

A helical transmembrane segment spans residues 1–21 (MFDIGVGELTLIAVVALVVLG). The disordered stretch occupies residues 188-208 (DAGTPAASMPSAPAKIQEKQP).

It belongs to the TatB family. In terms of assembly, the Tat system comprises two distinct complexes: a TatABC complex, containing multiple copies of TatA, TatB and TatC subunits, and a separate TatA complex, containing only TatA subunits. Substrates initially bind to the TatABC complex, which probably triggers association of the separate TatA complex to form the active translocon.

The protein resides in the cell inner membrane. Part of the twin-arginine translocation (Tat) system that transports large folded proteins containing a characteristic twin-arginine motif in their signal peptide across membranes. Together with TatC, TatB is part of a receptor directly interacting with Tat signal peptides. TatB may form an oligomeric binding site that transiently accommodates folded Tat precursor proteins before their translocation. The protein is Sec-independent protein translocase protein TatB of Xanthomonas axonopodis pv. citri (strain 306).